Reading from the N-terminus, the 196-residue chain is Aequorin-2 (196 aa).

A propeptide spanning residues 1–7 (MTSKQYS) is cleaved from the precursor. 4 EF-hand domains span residues 18-53 (RWIG…IVIN), 54-108 (NLGA…AKNE), 117-146 (DALF…AGII), and 147-182 (QSSE…FWYT). D31, N33, N35, K37, and E42 together coordinate Ca(2+). May interact with the chromophore stretches follow at residues 47-57 (ASDIVINNLGA), 62-72 (AKRHKDAVEAF), and 107-117 (NEPTLIRIWGD). Ca(2+)-binding residues include D124, D126, N128, E135, D160, D162, S164, Q166, and E171.

This sequence belongs to the aequorin family. In terms of processing, the reduction of the disulfide bond is necessary to regenerate aequorin from apoaequorin.

Its function is as follows. Ca(2+)-dependent bioluminescence photoprotein. Displays an emission peak at 470 nm (blue light). Trace amounts of calcium ion trigger the intramolecular oxidation of the chromophore, coelenterazine into coelenteramide and CO(2) with the concomitant emission of light. The sequence is that of Aequorin-2 from Aequorea victoria (Water jellyfish).